The chain runs to 620 residues: Alkaline nuclease (620 aa).

A compositionally biased stretch (low complexity) spans 1–10; the sequence is MAAAATPGAK. 2 disordered regions span residues 1-122 and 595-620; these read MAAA…SASA and ASRSPGRGPAAADTTSSPPTAGRSSR. Over residues 11-23 the composition is skewed to basic and acidic residues; that stretch reads RPADPARDPDSPP. Residues 40-49 show a composition bias toward pro residues; that stretch reads RPAPPRPTSP. Positions 603–620 are enriched in low complexity; it reads PAAADTTSSPPTAGRSSR.

It belongs to the herpesviridae alkaline nuclease family. In terms of assembly, interacts with major DNA-binding protein; this interaction increases the nuclease processivity of the alkaline exonuclease.

It localises to the host nucleus. Its subcellular location is the host cytoplasm. Functionally, plays a role in processing non linear or branched viral DNA intermediates in order to promote the production of mature packaged unit-length linear progeny viral DNA molecules. Exhibits endonuclease and exonuclease activities and accepts both double-stranded and single-stranded DNA as substrate. Exonuclease digestion of DNA is in the 5'-&gt; 3' direction and the products are 5'-monophosphate nucleosides. Additionally, forms a recombinase with the major DNA-binding protein, which displays strand exchange activity. The polypeptide is Alkaline nuclease (Homo sapiens (Human)).